The sequence spans 250 residues: tRNA (guanine-N(1)-)-methyltransferase (250 aa).

Residues glycine 115 and 135-140 (LGDFVL) contribute to the S-adenosyl-L-methionine site.

Belongs to the RNA methyltransferase TrmD family. Homodimer.

Its subcellular location is the cytoplasm. The enzyme catalyses guanosine(37) in tRNA + S-adenosyl-L-methionine = N(1)-methylguanosine(37) in tRNA + S-adenosyl-L-homocysteine + H(+). In terms of biological role, specifically methylates guanosine-37 in various tRNAs. The polypeptide is tRNA (guanine-N(1)-)-methyltransferase (Legionella pneumophila (strain Lens)).